Consider the following 248-residue polypeptide: Ribonuclease PH (248 aa).

Residues R93 and 131 to 133 (GTR) contribute to the phosphate site.

It belongs to the RNase PH family. In terms of assembly, homohexameric ring arranged as a trimer of dimers.

The catalysed reaction is tRNA(n+1) + phosphate = tRNA(n) + a ribonucleoside 5'-diphosphate. Functionally, phosphorolytic 3'-5' exoribonuclease that plays an important role in tRNA 3'-end maturation. Removes nucleotide residues following the 3'-CCA terminus of tRNAs; can also add nucleotides to the ends of RNA molecules by using nucleoside diphosphates as substrates, but this may not be physiologically important. Probably plays a role in initiation of 16S rRNA degradation (leading to ribosome degradation) during starvation. The polypeptide is Ribonuclease PH (Bifidobacterium longum (strain NCC 2705)).